The primary structure comprises 246 residues: 3-deoxy-manno-octulosonate cytidylyltransferase (246 aa).

The protein belongs to the KdsB family.

It is found in the cytoplasm. It catalyses the reaction 3-deoxy-alpha-D-manno-oct-2-ulosonate + CTP = CMP-3-deoxy-beta-D-manno-octulosonate + diphosphate. The protein operates within nucleotide-sugar biosynthesis; CMP-3-deoxy-D-manno-octulosonate biosynthesis; CMP-3-deoxy-D-manno-octulosonate from 3-deoxy-D-manno-octulosonate and CTP: step 1/1. It functions in the pathway bacterial outer membrane biogenesis; lipopolysaccharide biosynthesis. Functionally, activates KDO (a required 8-carbon sugar) for incorporation into bacterial lipopolysaccharide in Gram-negative bacteria. This is 3-deoxy-manno-octulosonate cytidylyltransferase from Bradyrhizobium sp. (strain ORS 278).